Consider the following 139-residue polypeptide: Transcriptional regulator WhiB5 (139 aa).

The 4Fe-4S Wbl-type domain occupies 4 to 77 (PCATDPELWF…AGIKLPGGQY (74 aa)). [4Fe-4S] cluster is bound by residues Cys5, Cys41, Cys45, and Cys53.

This sequence belongs to the WhiB family. Requires [4Fe-4S] cluster as cofactor. The Fe-S cluster can be nitrosylated by nitric oxide (NO). In terms of processing, upon Fe-S cluster removal intramolecular disulfide bonds are formed.

Its subcellular location is the cytoplasm. Functionally, a transcription factor that is probably redox-responsive. Probably plays a role in immunomodulation and reactivation after chronic infection. Its induction results in transcription of a number of genes including sigM, and the genes for 2 type VII secretion systems ESX-2 and ESX-4. Seems to negatively regulate its own expression. The apo-form has been shown to act as a protein disulfide reductase. The apo- but not holo-form probably binds DNA. The chain is Transcriptional regulator WhiB5 (whiB5) from Mycobacterium tuberculosis (strain ATCC 25618 / H37Rv).